Consider the following 147-residue polypeptide: MLSPRNRMRRRADFDTALRHGRRAGRNALSVALFVPQDTPDQPGGDAPPRVGFSVSKAVGKAVVRKRVQRRLRHLMRERVGSLPAGSLLVVRAKPQAALLDYSELAAQLDSALRAVTRPRGQSSHRTRASREATSAHTTAVGEQPTQ.

Residues 117–147 (TRPRGQSSHRTRASREATSAHTTAVGEQPTQ) are disordered.

Belongs to the RnpA family. In terms of assembly, consists of a catalytic RNA component (M1 or rnpB) and a protein subunit.

It carries out the reaction Endonucleolytic cleavage of RNA, removing 5'-extranucleotides from tRNA precursor.. Its function is as follows. RNaseP catalyzes the removal of the 5'-leader sequence from pre-tRNA to produce the mature 5'-terminus. It can also cleave other RNA substrates such as 4.5S RNA. The protein component plays an auxiliary but essential role in vivo by binding to the 5'-leader sequence and broadening the substrate specificity of the ribozyme. In Thermobifida fusca (strain YX), this protein is Ribonuclease P protein component.